We begin with the raw amino-acid sequence, 373 residues long: G protein-coupled receptor 137Ba (373 aa).

Over 1-15 the chain is Lumenal; the sequence is MQKDSLPTLSPAVPP. A helical membrane pass occupies residues 16 to 36; sequence YVMLGLTVAYTIFYCLLFVFV. The Cytoplasmic segment spans residues 37-55; the sequence is YVQLWLVLRYRHKRFSYQT. Residues 56-76 traverse the membrane as a helical segment; sequence VFLFLCLLWAALRALLFSFYF. Topologically, residues 77–84 are lumenal; the sequence is KNCVTANT. A helical membrane pass occupies residues 85 to 105; it reads LGPFCFWLLYCFPVCLQFFTL. Residues 106 to 135 are Cytoplasmic-facing; the sequence is SLMNLYFAQVIFKAKSKYSPELQKYRLPLY. The helical transmembrane segment at 136–156 threads the bilayer; sequence LLFLSISLLFLLVNLTCALLV. The Lumenal segment spans residues 157–176; the sequence is KINRANTETVVLVRVTVNDS. A helical transmembrane segment spans residues 177–197; it reads LFVLCAVSLSLCLYRIAKMSL. Residues 198–213 lie on the Cytoplasmic side of the membrane; that stretch reads ANIYLEAKGTSVCQVT. The chain crosses the membrane as a helical span at residues 214–234; the sequence is LIGVTVVLLYSSRACYNLVVL. Over 235 to 268 the chain is Lumenal; sequence ALTKIKSINSFDYDWYNVSDQADLKSTLGDAGYV. The helical transmembrane segment at 269–289 threads the bilayer; the sequence is VFGVILFVWELLPTSLVVYFF. Residues 290-373 are Cytoplasmic-facing; that stretch reads RVRKPTLDRS…HLAPEELNPY (84 aa).

The protein belongs to the GPR137 family.

It localises to the lysosome membrane. Functionally, lysosomal integral membrane protein that regulates the localization and activity of mTORC1, a signaling complex promoting cell growth in response to growth factors, energy levels, and amino acids. Interacts with Rag GTPases and increases the lysosomial localization and activity of Rag GTPases and thereby regulates mTORC1 translocation and activity in lysosome. Also acts as a negative regulator of osteoclast activity. May be involved in interleukin-4-induced M2 macrophage polarization. Its function is as follows. Also acts as a negative regulator of osteoclast activity. May be involved in interleukin-4-induced M2 macrophage polarization. The protein is G protein-coupled receptor 137Ba of Danio rerio (Zebrafish).